The sequence spans 59 residues: uncharacterized protein (59 aa).

Residue 33-40 (GRRRVGKT) participates in ATP binding.

This is an uncharacterized protein from Methanocaldococcus jannaschii (strain ATCC 43067 / DSM 2661 / JAL-1 / JCM 10045 / NBRC 100440) (Methanococcus jannaschii).